A 703-amino-acid chain; its full sequence is MKTVIILAGLVALALGSEVPVKHSFKVKDVDAAFVERQKKVLDLFQDVDQVNPNDEYYKIGKEYNIEANIDNYSNKKAVEEFLQLYRTGFLPKYYEFSPFYDRLRDEAIGVFHLFYYAKDFDTFYKSAAWARVYLNEGQFLYAYYIAVIQRKDTQGFVVPAPYEVYPQFFANLNTMLKVYRTKMQDGVVSADLAAQHGIVKEKNYYVYYANYSNSLVYNNEEQRLSYFTEDIGLNSYYYYFHSHLPFWWNSERYGALKSRRGEIYYYFYQQLMARYYFERLSNGLGDIPEFSWYSPVKSGYYPLMSSYYYPFAQRPNYWNVHSEENYEKVRFLDTYEMSFLQFLQNGHFKAFDQKIDFHDFKAINFVGNYWQDNADLYGEEVTKDYQRSYEIIARQVLGAAPKPFDKYTFMPSALDFYQTSLRDPMFYQLYNRILKYIYEYKQYLQPYSSEKLAFKGVKVVDVVVDKLVTFFEYYDFDASNSVFWSKEEVKSSYPHDFKIRQPRLNHKPFSVSIDIKSEAAVDAVVKIFMAPKYDDNGFPLKLENNWNKFFELDWFTYKFVAGDNKIVRNSNDFLIFKDDSVPMTELYKLLEQNKVPHDMSEDYGYLPKRLMLPRGTEGGFPFQFFVFVYPFNADSKDLAPFEAFIQDNKPLGYPFDRPVVDAYFKQHNMFFKDVFVYHDGEYFPYKFNVPSHVMHSNVVPKH.

The N-terminal stretch at 1-16 (MKTVIILAGLVALALG) is a signal peptide. Residues Asn-72 and Asn-211 are each glycosylated (N-linked (GlcNAc...) asparagine).

The protein belongs to the hemocyanin family. As to quaternary structure, arylphorin is a hexamer of subunits alpha and beta. Fat body.

The protein localises to the secreted. The protein resides in the extracellular space. Arylphorin is a larval storage protein (LSP) which may serve as a storage protein used primarily as a source of aromatic amino acids for protein synthesis during metamorphosis. It is a constituent of the sclerotizing system of the cuticle, and serves as a carrier for ecdysteroid hormone. The polypeptide is Arylphorin subunit beta (Manduca sexta (Tobacco hawkmoth)).